The chain runs to 105 residues: Membrane-stabilizing protein A (105 aa).

Residues 1-21 (MQFYLILLAILYLIVSFISIF) form a helical membrane-spanning segment. Residues 22–29 (KMEVVFTR) lie on the Cytoplasmic side of the membrane. A helical membrane pass occupies residues 30 to 50 (ILRIIMGVLLLFVLALTTMSF). The Extracellular segment spans residues 51–55 (PKENW). A helical membrane pass occupies residues 56–76 (WVFIVLLLLVGNVEVTGFKML). Over 77-84 (KKDLKGVN) the chain is Cytoplasmic. A helical membrane pass occupies residues 85–105 (ILNLMSLFIFVIYFILTIVLF).

This sequence belongs to the MspA family.

The protein localises to the membrane. Functionally, plays a role in toxin production, resistance to host innate immune mechanisms, and iron homeostasis. This Staphylococcus aureus (strain NCTC 8325 / PS 47) protein is Membrane-stabilizing protein A.